Reading from the N-terminus, the 216-residue chain is Cyclo(L-leucyl-L-leucyl) synthase (216 aa).

Ser14 serves as the catalytic Nucleophile. Substrate contacts are provided by residues Asn17, Tyr155–Glu159, and Tyr179.

This sequence belongs to the CDPS family.

The enzyme catalyses 2 L-leucyl-tRNA(Leu) = cyclo(L-leucyl-L-leucyl) + 2 tRNA(Leu) + 2 H(+). In terms of biological role, it uses activated amino acids in the form of aminoacyl-tRNAs (aa-tRNAs) as substrates to catalyze the ATP-independent formation of cyclodipeptides which are intermediates in diketopiperazine (DKP) biosynthetic pathways. Catalyzes the formation of cyclo(L-Leu-L-Leu) (cLL) from L-leucyl-tRNA(Leu). Can incorporate various nonpolar residues, such as L-leucine and L-methionine, into cyclodipeptides. The polypeptide is Cyclo(L-leucyl-L-leucyl) synthase (Corynebacterium jeikeium (strain K411)).